Reading from the N-terminus, the 281-residue chain is Leukocyte antigen CD37 (281 aa).

Topologically, residues 1 to 17 are cytoplasmic; sequence MSAQESCLSLIKYFLFV. A helical membrane pass occupies residues 18–38; the sequence is FNLFFFVLGGLIFCFGTWILI. At 39-59 the chain is on the extracellular side; sequence DKTSFVSFVGLSFVPLQTWSK. The chain crosses the membrane as a helical span at residues 60-74; the sequence is VLSVSGVLTMALALL. Topologically, residues 75–85 are cytoplasmic; the sequence is GCVGALKELRC. A helical membrane pass occupies residues 86 to 111; it reads LLGLYFGMLLLLFATQITLGILISTQ. Residues 112–241 are Extracellular-facing; the sequence is RVRLERRVQE…RSLQKWLHNN (130 aa). N-linked (GlcNAc...) asparagine glycans are attached at residues asparagine 170, asparagine 183, and asparagine 188. A helical membrane pass occupies residues 242 to 266; it reads IISIVGICLGVGLLELGFMTLSIFL. At 267–281 the chain is on the cytoplasmic side; it reads CRNLDHVYDRLARYR.

The protein belongs to the tetraspanin (TM4SF) family. As to quaternary structure, interacts with SCIMP. Interacts with SOCS3. Interacts with DECTIN1/CLEC7A. In terms of processing, tyrosine phosphorylated; leading to activation of downstream signaling pathways. B-lymphocytes.

It localises to the cell membrane. Functionally, structural component of specialized membrane microdomains known as tetraspanin-enriched microdomains (TERMs), which act as platforms for receptor clustering and signaling. Participates thereby in diverse biological functions such as cell signal transduction, adhesion, migration and protein trafficking. Upon ligand binding, two signaling pathways are activated, one acting through phosphorylation by LYN leading to cell death or a survival pathway with activation of GSK3B. Plays an essential role essential for clustering of integrin ITGA4/ITGB1 and promotes its mobility in the plasma membrane of B-cells. In turn, participates in ITGA4/ITGB1 integrin-mediated antiapoptotic signaling through AKT. Plays also a role in the migration of dendritic cells and neutrophils to draining lymph nodes, as well as in their integrin-mediated adhesion. Negatively regulates IL-6 responses through direct interaction with SOCS3 thereby preventing constitutive IL-6 signaling. Alternatively, inhibition of IL-6 signaling can also occur via interaction and stabilization of DECTIN1/CLEC7A at the cell membrane to inhibit its ability to promote the production of IL-6. This is Leukocyte antigen CD37 (Cd37) from Rattus norvegicus (Rat).